A 162-amino-acid chain; its full sequence is Large ribosomal subunit protein uL22c (162 aa).

Belongs to the universal ribosomal protein uL22 family. Part of the 50S ribosomal subunit.

Its subcellular location is the plastid. It localises to the chloroplast. Functionally, this protein binds specifically to 23S rRNA. Its function is as follows. The globular domain of the protein is located near the polypeptide exit tunnel on the outside of the subunit, while an extended beta-hairpin is found that lines the wall of the exit tunnel in the center of the 70S ribosome. This Cucumis sativus (Cucumber) protein is Large ribosomal subunit protein uL22c (rpl22).